The primary structure comprises 431 residues: V-type ATP synthase beta chain (431 aa).

This sequence belongs to the ATPase alpha/beta chains family.

In terms of biological role, produces ATP from ADP in the presence of a proton gradient across the membrane. The V-type beta chain is a regulatory subunit. This is V-type ATP synthase beta chain from Treponema denticola (strain ATCC 35405 / DSM 14222 / CIP 103919 / JCM 8153 / KCTC 15104).